Consider the following 261-residue polypeptide: Ribonuclease HII (261 aa).

Positions 71–259 constitute an RNase H type-2 domain; that stretch reads KYIAGVDEVG…VKEAKLHFDS (189 aa). Positions 77, 78, and 169 each coordinate a divalent metal cation.

This sequence belongs to the RNase HII family. Mn(2+) is required as a cofactor. It depends on Mg(2+) as a cofactor.

The protein localises to the cytoplasm. The catalysed reaction is Endonucleolytic cleavage to 5'-phosphomonoester.. Its function is as follows. Endonuclease that specifically degrades the RNA of RNA-DNA hybrids. In Listeria monocytogenes serotype 4a (strain HCC23), this protein is Ribonuclease HII.